The following is a 197-amino-acid chain: Recombination protein RecR (197 aa).

A C4-type zinc finger spans residues 55-70 (CVQCRDFTESEICTIC). The 96-residue stretch at 78 to 173 (QQLCVVESPA…RPSRLAQGMP (96 aa)) folds into the Toprim domain.

The protein belongs to the RecR family.

In terms of biological role, may play a role in DNA repair. It seems to be involved in an RecBC-independent recombinational process of DNA repair. It may act with RecF and RecO. The polypeptide is Recombination protein RecR (Xanthomonas euvesicatoria pv. vesicatoria (strain 85-10) (Xanthomonas campestris pv. vesicatoria)).